We begin with the raw amino-acid sequence, 303 residues long: Probable cell division protein WhiA (303 aa).

The segment at residues 272–303 is a DNA-binding region (H-T-H motif); it reads SIQQLADSLSTPLTKSGVNHRLRKINKIADEL.

Belongs to the WhiA family.

In terms of biological role, involved in cell division and chromosome segregation. The protein is Probable cell division protein WhiA of Streptococcus pneumoniae serotype 2 (strain D39 / NCTC 7466).